A 91-amino-acid polypeptide reads, in one-letter code: uncharacterized protein (91 aa).

Its subcellular location is the plastid. The protein localises to the chloroplast. This is an uncharacterized protein from Phalaenopsis aphrodite subsp. formosana (Moth orchid).